Here is a 238-residue protein sequence, read N- to C-terminus: Zinc import ATP-binding protein ZnuC (238 aa).

The region spanning 5–220 (ITLKNIHVSF…LEFISIFGLK (216 aa)) is the ABC transporter domain. Position 37–44 (37–44 (GPNGAGKS)) interacts with ATP.

The protein belongs to the ABC transporter superfamily. Zinc importer (TC 3.A.1.15.5) family. In terms of assembly, the complex is composed of two ATP-binding proteins (ZnuC), two transmembrane proteins (ZnuB) and a solute-binding protein (ZnuA).

The protein localises to the cell inner membrane. It carries out the reaction Zn(2+)(out) + ATP(in) + H2O(in) = Zn(2+)(in) + ADP(in) + phosphate(in) + H(+)(in). Its function is as follows. Part of the ABC transporter complex ZnuABC involved in zinc import. Responsible for energy coupling to the transport system. The chain is Zinc import ATP-binding protein ZnuC from Buchnera aphidicola subsp. Schizaphis graminum (strain Sg).